A 115-amino-acid chain; its full sequence is Large ribosomal subunit protein uL22 (115 aa).

This sequence belongs to the universal ribosomal protein uL22 family. In terms of assembly, part of the 50S ribosomal subunit.

Functionally, this protein binds specifically to 23S rRNA; its binding is stimulated by other ribosomal proteins, e.g. L4, L17, and L20. It is important during the early stages of 50S assembly. It makes multiple contacts with different domains of the 23S rRNA in the assembled 50S subunit and ribosome. Its function is as follows. The globular domain of the protein is located near the polypeptide exit tunnel on the outside of the subunit, while an extended beta-hairpin is found that lines the wall of the exit tunnel in the center of the 70S ribosome. The polypeptide is Large ribosomal subunit protein uL22 (Nitrosospira multiformis (strain ATCC 25196 / NCIMB 11849 / C 71)).